We begin with the raw amino-acid sequence, 570 residues long: MTEVNVRAAATPEEKPFLNRTRHEPANPQPNRSVLVFLHGWGSDKRQWQSFVPTLLEALGDEREMVFIDLPGFGDNSDFRCDDLEHMLKQLARIIPGNATLIGWSLGGMIATQLASRHPEKIGRLITIATNPLFVKNDAEIAAGKAPWKHAMERETFSDFVNGFADDPEATLKRFIALQSMGDSERRQVTDTLKNLLSFSAHSQQTCWANALSYLDQLDNRTALRNLTQPALHIYGKSDALVPVRAGRALQGLAPSHWVESITAAGHAPHISHPREVATMINSFLRQQAPRLSQRKRRIANSFSSAAQEYDTLARLQKRVVDSLVEFSLGTGGSVGQTLLDLGCGTGYCIERLLQQFPEITQPEGRIHALDIAEGMLDRAQQKFDELGVAEQINWHLGDMESLPFVDESFDGCISSLTVQWSENPLQLFSEMYRALKPGGWFALSTLGPETLFELRSAWRMVDEFAHVNKFLSLESVKSVAEQAGLQMVAYKSETPVLYYHSVVHLMRELKGIGAHTINEGRQNGLMGRATFRRLEEAYDNWLDPDRGLPARYEVYYIYLRKPLDESASA.

The disordered stretch occupies residues M1–Q29. Residues M1 to T279 are carboxylesterase. Over residues P12–P25 the composition is skewed to basic and acidic residues. Substrate is bound by residues W41, S105–L106, and F175–Q179. S105 functions as the Nucleophile in the catalytic mechanism. Active-site residues include D239 and H267. H267 contacts substrate. A malonyl-ACP O-methyltransferase region spans residues M280 to A570.

It in the N-terminal section; belongs to the AB hydrolase superfamily. Carboxylesterase BioH family. This sequence in the C-terminal section; belongs to the methyltransferase superfamily.

The catalysed reaction is a carboxylic ester + H2O = an alcohol + a carboxylate + H(+). It catalyses the reaction malonyl-[ACP] + S-adenosyl-L-methionine = malonyl-[ACP] methyl ester + S-adenosyl-L-homocysteine. It functions in the pathway cofactor biosynthesis; biotin biosynthesis. Converts the free carboxyl group of a malonyl-thioester to its methyl ester by transfer of a methyl group from S-adenosyl-L-methionine (SAM). It allows to synthesize pimeloyl-ACP via the fatty acid synthetic pathway. In terms of biological role, the physiological role of BioH is to remove the methyl group introduced by BioC when the pimeloyl moiety is complete. It allows to synthesize pimeloyl-ACP via the fatty acid synthetic pathway through the hydrolysis of the ester bonds of pimeloyl-ACP esters. The protein is Biotin biosynthesis bifunctional protein BioHC (bioC) of Teredinibacter turnerae (strain ATCC 39867 / T7901).